A 349-amino-acid chain; its full sequence is Phosphoribosylformylglycinamidine cyclo-ligase (349 aa).

This sequence belongs to the AIR synthase family.

The protein localises to the cytoplasm. The enzyme catalyses 2-formamido-N(1)-(5-O-phospho-beta-D-ribosyl)acetamidine + ATP = 5-amino-1-(5-phospho-beta-D-ribosyl)imidazole + ADP + phosphate + H(+). It functions in the pathway purine metabolism; IMP biosynthesis via de novo pathway; 5-amino-1-(5-phospho-D-ribosyl)imidazole from N(2)-formyl-N(1)-(5-phospho-D-ribosyl)glycinamide: step 2/2. In Bordetella pertussis (strain Tohama I / ATCC BAA-589 / NCTC 13251), this protein is Phosphoribosylformylglycinamidine cyclo-ligase.